The sequence spans 472 residues: Homeobox protein PKNOX2 (472 aa).

Positions 1–62 (MMQHASPAPA…STPVPSAPID (62 aa)) are disordered. Residues 26–38 (DSPQMTATTQPPS) show a composition bias toward polar residues. Over residues 46–56 (SAPSAAASTPV) the composition is skewed to low complexity. The MEIS N-terminal domain maps to 96–179 (GSECITSASF…MHSDNLLRND (84 aa)). The homeobox DNA-binding region spans 291–350 (KRGVLPKHATNIMRSWLFQHLMHPYPTEDEKRQIAAQTNLTLLQVNNWFVNARRRILQPM). Disordered stretches follow at residues 351-371 (LDASNPDPAPKAKKIKSQHRP), 386-405 (QQQGGAPGTNPDGSINLDNL), and 423-472 (AAHD…DSLV). Residues 361 to 371 (KAKKIKSQHRP) are compositionally biased toward basic residues. Residues 396–405 (PDGSINLDNL) are compositionally biased toward polar residues. A compositionally biased stretch (acidic residues) spans 429-454 (LDGTEEEDEDEMEEEEEEELEEEVDE).

This sequence belongs to the TALE/MEIS homeobox family.

The protein localises to the nucleus. In Pongo abelii (Sumatran orangutan), this protein is Homeobox protein PKNOX2 (PKNOX2).